The primary structure comprises 386 residues: MKWLLLISLVALSECAIVKVPLVRKKSLRQNLIEHGLLNDFLKNQSPNPASKYFPQEPTVLATQSLKNYMDMEYFGTIGIGTPPQEFTVIFDTGSSNLWVPSVYCSSPACSNHNRFNPQESSTYQGTNRPVSIAYGTGSMTGILGYDTVQVGGIADTNQIFGLSETEPGSFLYYAPFDGILGLAYPQISASGATPVFDNMWNEGLVSQDLFSVYLSSDDQSGSVVMFGGIDSSYYSGNLNWVPVSVEGYWQITVDSVTMNGQAIACSDGCQAIVDTGTSLLAGPTNAIANIQSYIGASQNSYGQMVISCSAINSLPDIVFTINGIQYPLPPSAYILQSQQGCVSGFQGMNLPTASGELWILGDVFIRQYFAVFDRANNQVGLAPVA.

Residues 1–15 (MKWLLLISLVALSEC) form the signal peptide. The propeptide at 16-60 (AIVKVPLVRKKSLRQNLIEHGLLNDFLKNQSPNPASKYFPQEPTV) is activation peptide. The Peptidase A1 domain maps to 74–383 (YFGTIGIGTP…DRANNQVGLA (310 aa)). D92 is a catalytic residue. Disulfide bonds link C105–C110 and C266–C270. Residue D275 is part of the active site. C309 and C342 are joined by a disulfide.

Belongs to the peptidase A1 family.

It localises to the secreted. It catalyses the reaction Preferential cleavage: hydrophobic, preferably aromatic, residues in P1 and P1' positions. Cleaves 1-Phe-|-Val-2, 4-Gln-|-His-5, 13-Glu-|-Ala-14, 14-Ala-|-Leu-15, 15-Leu-|-Tyr-16, 16-Tyr-|-Leu-17, 23-Gly-|-Phe-24, 24-Phe-|-Phe-25 and 25-Phe-|-Tyr-26 bonds in the B chain of insulin.. Shows particularly broad specificity; although bonds involving phenylalanine and leucine are preferred, many others are also cleaved to some extent. This Canis lupus familiaris (Dog) protein is Pepsin A (PGA).